Here is a 395-residue protein sequence, read N- to C-terminus: Nicotinamide/nicotinic acid mononucleotide adenylyltransferase 2 (395 aa).

Disordered stretches follow at residues 1–34 (MDPT…SGPI) and 62–102 (KKNA…NGID). A compositionally biased stretch (pro residues) spans 9 to 24 (FKPPQPNEELQPPPDP). Phosphoserine is present on residues S85, S89, and S90. Residues S167 and F168 each contribute to the NAD(+) site. Residues H175 and R209 each contribute to the ATP site. 6 residues coordinate NAD(+): T247, G282, D284, W295, R314, and N345. 350-353 (TKVR) contributes to the ATP binding site.

This sequence belongs to the eukaryotic NMN adenylyltransferase family. Co(2+) is required as a cofactor.

It is found in the nucleus. The catalysed reaction is beta-nicotinamide D-ribonucleotide + ATP + H(+) = diphosphate + NAD(+). The enzyme catalyses nicotinate beta-D-ribonucleotide + ATP + H(+) = deamido-NAD(+) + diphosphate. Its pathway is cofactor biosynthesis; NAD(+) biosynthesis; deamido-NAD(+) from nicotinate D-ribonucleotide: step 1/1. The protein operates within cofactor biosynthesis; NAD(+) biosynthesis; NAD(+) from nicotinamide D-ribonucleotide: step 1/1. In terms of biological role, catalyzes the formation of NAD(+) from nicotinamide mononucleotide (NMN) and ATP. Can also use the deamidated form; nicotinic acid mononucleotide (NaMN) as substrate to form deamido-NAD(+) (NaAD). Key enzyme in both de novo and salvage pathways for NAD(+) biosynthesis. Predominantly acts in the salvage pathways via NMN. The chain is Nicotinamide/nicotinic acid mononucleotide adenylyltransferase 2 from Saccharomyces cerevisiae (strain ATCC 204508 / S288c) (Baker's yeast).